A 351-amino-acid chain; its full sequence is Serine/threonine-protein kinase mos (351 aa).

The 270-residue stretch at phenylalanine 71–leucine 340 folds into the Protein kinase domain. ATP-binding positions include isoleucine 77–valine 85 and lysine 98. Aspartate 194 (proton acceptor) is an active-site residue.

The protein belongs to the protein kinase superfamily. Ser/Thr protein kinase family.

The catalysed reaction is L-seryl-[protein] + ATP = O-phospho-L-seryl-[protein] + ADP + H(+). It catalyses the reaction L-threonyl-[protein] + ATP = O-phospho-L-threonyl-[protein] + ADP + H(+). In terms of biological role, suppresses the mitotic cell cycle in oocytes, forcing them to undergo meiosis II to produce haploid gametes. Acts as a MAPK kinase kinase (MAP3K) that acts upstream of MAP kinase in oocytes. The protein is Serine/threonine-protein kinase mos of Patiria pectinifera (Starfish).